The primary structure comprises 307 residues: Protoheme IX farnesyltransferase (307 aa).

8 helical membrane-spanning segments follow: residues 32–52, 65–85, 108–128, 131–151, 158–178, 186–206, 251–271, and 287–307; these read MGIVNSNTLTVFTGFWLALHF, FFTIVGSALIMAGVCCLNNYI, PGFALAFGLVILLLGFVFLLL, PMAVLISFIGAFTYVVLYTLW, LNTVVGSISGAVPPLIGWAAI, IAWMLFLIMFIWQIPHFLALA, LGITFMVIATLLNIGWIALGL, and FVYSLNYLTILFVSMIVVTFF.

This sequence belongs to the UbiA prenyltransferase family. Protoheme IX farnesyltransferase subfamily. In terms of assembly, interacts with CtaA.

Its subcellular location is the cell membrane. It carries out the reaction heme b + (2E,6E)-farnesyl diphosphate + H2O = Fe(II)-heme o + diphosphate. It participates in porphyrin-containing compound metabolism; heme O biosynthesis; heme O from protoheme: step 1/1. Functionally, converts heme B (protoheme IX) to heme O by substitution of the vinyl group on carbon 2 of heme B porphyrin ring with a hydroxyethyl farnesyl side group. In Bacillus mycoides (strain KBAB4) (Bacillus weihenstephanensis), this protein is Protoheme IX farnesyltransferase.